The sequence spans 2225 residues: Multifunctional protein CAD (2225 aa).

At alanine 2 the chain carries N-acetylalanine. Residues 2 to 365 (AALVLEDGSV…TVREAAAGNI (364 aa)) form a GATase (Glutamine amidotransferase) region. The L-glutamine site is built by serine 44, glycine 222, and glycine 224. The 187-residue stretch at 177-363 (RICALDCGLK…LETVREAAAG (187 aa)) folds into the Glutamine amidotransferase type-1 domain. Residue cysteine 252 is the Nucleophile; for GATase activity of the active site. 5 residues coordinate L-glutamine: leucine 253, glutamine 256, asparagine 294, glycine 296, and phenylalanine 297. Residues histidine 336 and glutamate 338 each act as for GATase activity in the active site. The segment at 366–394 (GGQTVRERLAQRLCPPELPIPGSGLPPPR) is linker. Residues 395–933 (KVLILGSGGL…NTHDLDFRAP (539 aa)) form a CPSase A region. Residues 395 to 1455 (KVLILGSGGL…APPLKVHVDC (1061 aa)) form a CPSase (Carbamoyl-phosphate synthase) region. The residue at position 456 (threonine 456) is a Phosphothreonine; by MAPK1. Arginine 515, arginine 555, glycine 561, glycine 562, lysine 592, glutamate 599, glycine 625, isoleucine 626, histidine 627, glutamine 668, and glutamate 682 together coordinate ATP. In terms of domain architecture, ATP-grasp 1 spans 519 to 711 (AARMAEIGEH…LAYVAAKLAL (193 aa)). Mg(2+) is bound by residues glutamine 668, glutamate 682, and asparagine 684. 3 residues coordinate Mn(2+): glutamine 668, glutamate 682, and asparagine 684. Lysine 747 carries the post-translational modification N6-acetyllysine. The tract at residues 934–1455 (HVLVLGSGVY…APPLKVHVDC (522 aa)) is CPSase B. The residue at position 1038 (serine 1038) is a Phosphoserine. The 192-residue stretch at 1052–1243 (SRLLDTIGIS…LVALATRIIM (192 aa)) folds into the ATP-grasp 2 domain. Arginine 1088, lysine 1127, isoleucine 1129, glutamate 1134, glycine 1159, valine 1160, histidine 1161, serine 1162, glutamine 1202, and glutamate 1214 together coordinate ATP. Glutamine 1202, glutamate 1214, and asparagine 1216 together coordinate Mg(2+). Mn(2+) contacts are provided by glutamine 1202, glutamate 1214, and asparagine 1216. The region spanning 1308-1462 (FKIPEKNILL…VDCMTSQKLV (155 aa)) is the MGS-like domain. Residue serine 1406 is modified to Phosphoserine; by PKA. The residue at position 1411 (lysine 1411) is an N6-acetyllysine. Residues 1456–1788 (MTSQKLVRLP…VKGTVRRVVL (333 aa)) form a DHOase (dihydroorotase) region. 2 residues coordinate Zn(2+): histidine 1471 and histidine 1473. Positions 1475 and 1505 each coordinate (S)-dihydroorotate. 5 residues coordinate Zn(2+): lysine 1556, histidine 1590, cysteine 1613, histidine 1614, and glutamate 1637. Lysine 1556 bears the N6-carboxylysine mark. (S)-dihydroorotate is bound at residue arginine 1661. Aspartate 1686 contacts Zn(2+). Aspartate 1686 acts as the For DHOase activity in catalysis. Positions 1690 and 1702 each coordinate (S)-dihydroorotate. Residues 1789 to 1917 (RGEVAYIDGQ…GLLHPQMSPL (129 aa)) form a linker region. A disordered region spans residues 1815 to 1885 (GVVPQPPPST…VVEPELMGTP (71 aa)). Residues 1825-1834 (PATTEITTTP) show a composition bias toward low complexity. Serine 1859 carries the post-translational modification Phosphoserine. Over residues 1866–1878 (EEPKEKPPRKVVE) the composition is skewed to basic and acidic residues. Position 1884 is a phosphothreonine (threonine 1884). Phosphoserine is present on residues serine 1900 and serine 1938. The tract at residues 1918 to 2225 (LHSLVGQHIL…ALLATVLGRF (308 aa)) is ATCase (Aspartate transcarbamylase). Residues arginine 1975 and threonine 1976 each contribute to the carbamoyl phosphate site. Position 2003 (lysine 2003) interacts with L-aspartate. Positions 2024, 2052, and 2055 each coordinate carbamoyl phosphate. The L-aspartate site is built by arginine 2085 and arginine 2146. Residues methionine 2185 and proline 2186 each coordinate carbamoyl phosphate.

The protein in the N-terminal section; belongs to the CarA family. In the 2nd section; belongs to the CarB family. It in the 3rd section; belongs to the metallo-dependent hydrolases superfamily. DHOase family. CAD subfamily. This sequence in the C-terminal section; belongs to the aspartate/ornithine carbamoyltransferase superfamily. ATCase family. As to quaternary structure, homohexamer. Interacts with CIPC. The cofactor is Zn(2+). It depends on Mg(2+) as a cofactor. Mn(2+) serves as cofactor. Post-translationally, activated by MAP kinase (Erk1/2) phosphorylation just prior to the S phase of the cell cycle, when the demand for pyrimidine nucleotides is greatest, and down-regulated as the cells emerge from S phase by protein kinase A (PKA) phosphorylation. Phosphorylation at Ser-1859 by RPS6KB1 downstream of MTOR promotes oligomerization and stimulates dihydroorotase activity. Phosphorylation at Ser-1406 reduces sensitivity to feedback inhibition by UTP.

Its subcellular location is the cytoplasm. It localises to the nucleus. The catalysed reaction is hydrogencarbonate + L-glutamine + 2 ATP + H2O = carbamoyl phosphate + L-glutamate + 2 ADP + phosphate + 2 H(+). It catalyses the reaction L-glutamine + H2O = L-glutamate + NH4(+). The enzyme catalyses hydrogencarbonate + NH4(+) + 2 ATP = carbamoyl phosphate + 2 ADP + phosphate + 2 H(+). It carries out the reaction carbamoyl phosphate + L-aspartate = N-carbamoyl-L-aspartate + phosphate + H(+). The catalysed reaction is (S)-dihydroorotate + H2O = N-carbamoyl-L-aspartate + H(+). It participates in pyrimidine metabolism; UMP biosynthesis via de novo pathway; (S)-dihydroorotate from bicarbonate: step 1/3. The protein operates within pyrimidine metabolism; UMP biosynthesis via de novo pathway; (S)-dihydroorotate from bicarbonate: step 2/3. It functions in the pathway pyrimidine metabolism; UMP biosynthesis via de novo pathway; (S)-dihydroorotate from bicarbonate: step 3/3. With respect to regulation, allosterically regulated and controlled by phosphorylation. 5-phosphoribose 1-diphosphate (PRPP) is an activator while UMP and UTP are inhibitors of the CPSase reaction. In terms of biological role, multifunctional protein that encodes the first 3 enzymatic activities of the de novo pyrimidine pathway: carbamoylphosphate synthetase (CPSase; EC 6.3.5.5), aspartate transcarbamylase (ATCase; EC 2.1.3.2) and dihydroorotase (DHOase; EC 3.5.2.3). The CPSase-function is accomplished in 2 steps, by a glutamine-dependent amidotransferase activity (GATase) that binds and cleaves glutamine to produce ammonia, followed by an ammonium-dependent carbamoyl phosphate synthetase, which reacts with the ammonia, hydrogencarbonate and ATP to form carbamoyl phosphate. The endogenously produced carbamoyl phosphate is sequestered and channeled to the ATCase active site. ATCase then catalyzes the formation of carbamoyl-L-aspartate from L-aspartate and carbamoyl phosphate. In the last step, DHOase catalyzes the cyclization of carbamoyl aspartate to dihydroorotate. The sequence is that of Multifunctional protein CAD (Cad) from Mus musculus (Mouse).